Here is a 243-residue protein sequence, read N- to C-terminus: MEARVTVAGMGLVMEVQDYFDGEADRLAKAWLAEYTPQIKSLKDERKEAYRQIVEMSTEPQDVDLVRPANKFEMTRVREGEKEADLPVWKHHLLCDESGNYPALLNHWETKVFEIETKREGFAFWYRNPQYTGQSSLGIAYVEAEQYKIVRPDFLFFAEQDGKMVVDLVDPHSLHLADALPKLEGLALYAEHHSDAYRRIESVAEVKGKLRVLDLKRQDVQDAVATAENAETLFSSGLADDYQ.

This Escherichia coli (strain K12) protein is Protein YagJ (yagJ).